A 134-amino-acid polypeptide reads, in one-letter code: Protein Turandot E (134 aa).

An N-terminal signal peptide occupies residues 1-38 (MSYNRTLHSTTSILKMNSALQISCLLLVLGCLLGSGHG).

Belongs to the Turandot family.

The protein localises to the secreted. A humoral factor that may play a role in stress tolerance. This chain is Protein Turandot E, found in Drosophila yakuba (Fruit fly).